The sequence spans 197 residues: Protein-S-isoprenylcysteine O-methyltransferase B (197 aa).

3 consecutive transmembrane segments (helical) span residues 16-36, 52-72, and 81-101; these read MFLAIIFFHTSEYILAIAIHG, ALAMLISVLEYIAEIVFFPGL, and FGLTMIILGEILRKTAIITAG. S-adenosyl-L-methionine is bound by residues 116–119, Y124, and 129–132; these read HKLV and HPSY. The helical transmembrane segment at 140-160 threads the bilayer; the sequence is VGTQVMLCNPISAIAFAVVVW. R166 provides a ligand contact to substrate. E170 serves as a coordination point for S-adenosyl-L-methionine.

Belongs to the class VI-like SAM-binding methyltransferase superfamily. Isoprenylcysteine carboxyl methyltransferase family. Zn(2+) serves as cofactor. Expressed in flowers, stems, leaves, roots and siliques. Detected in apices and vascular tissues of leaves and roots, in the stigma and in the filaments and anthers of stamen. Not found in petioles or hypocotyls.

It localises to the endoplasmic reticulum membrane. The enzyme catalyses [protein]-C-terminal S-[(2E,6E)-farnesyl]-L-cysteine + S-adenosyl-L-methionine = [protein]-C-terminal S-[(2E,6E)-farnesyl]-L-cysteine methyl ester + S-adenosyl-L-homocysteine. With respect to regulation, inhibited by farnesylthioacetic acid (FTAA) and N-acetyl-S-trans, trans-farnesyl-l-cysteine (AFC). In terms of biological role, catalyzes the post-translational methylation of isoprenylated C-terminal cysteine residues, resulting in the modulation of the function of prenylated proteins. Involved in negative regulation of abscisic acid signaling. Carboxyl methylation is a reversible and potentially regulated step in the post-translational modification of prenylated proteins. The polypeptide is Protein-S-isoprenylcysteine O-methyltransferase B (Arabidopsis thaliana (Mouse-ear cress)).